Reading from the N-terminus, the 358-residue chain is Protein IncC (358 aa).

A disordered region spans residues 1-101 (MGAIHEETAN…VGSRRQEETG (101 aa)). Basic and acidic residues predominate over residues 88 to 99 (HRQEVGSRRQEE).

The protein belongs to the ParA family.

In terms of biological role, this is one of the proteins encoded by the trfB operon; it is involved in plasmid maintenance and replication. The chain is Protein IncC (incC) from Escherichia coli.